Reading from the N-terminus, the 127-residue chain is Major sperm protein isoform alpha (127 aa).

Position 2 is an N-acetylalanine (Ala2). An MSP domain is found at 9–126 (DINTQPSQKI…RRKNLPIEYN (118 aa)).

In terms of assembly, forms filaments 10 nm wide, with a characteristic substructure repeating axially at 9 nm. Sperm.

It localises to the cell projection. The protein resides in the pseudopodium. It is found in the cytoplasm. The protein localises to the cytoskeleton. In terms of biological role, central component in molecular interactions underlying sperm crawling. Forms an extensive filament system that extends from sperm villipoda, along the leading edge of the pseudopod. This Ascaris suum (Pig roundworm) protein is Major sperm protein isoform alpha.